Here is a 650-residue protein sequence, read N- to C-terminus: Primary amine oxidase 1 (650 aa).

A signal peptide spans 1–19; that stretch reads MNTSILAILFLIQCVFTLG. N-linked (GlcNAc...) asparagine glycans are attached at residues asparagine 2, asparagine 34, asparagine 62, and asparagine 149. Residues cysteine 155 and cysteine 176 are joined by a disulfide bond. N-linked (GlcNAc...) asparagine glycosylation is present at asparagine 235. A substrate-binding site is contributed by 308-319; sequence FMDIGEFGFGRS. Aspartate 310 acts as the Proton acceptor in catalysis. A disulfide bridge links cysteine 329 with cysteine 355. Residue 395-400 coordinates substrate; the sequence is LGNYDY. The active-site Schiff-base intermediate with substrate; via topaquinone is tyrosine 398. Tyrosine 398 carries the post-translational modification 2',4',5'-topaquinone. Residues histidine 453 and histidine 455 each coordinate Cu cation. Mn(2+) is bound by residues aspartate 462 and aspartate 464. Asparagine 486 carries an N-linked (GlcNAc...) asparagine glycan. Mn(2+)-binding residues include aspartate 607 and isoleucine 608. Histidine 618 contacts Cu cation.

The protein belongs to the copper/topaquinone oxidase family. Homodimer. L-topaquinone serves as cofactor. The cofactor is Cu cation. Zn(2+) is required as a cofactor. It depends on Mn(2+) as a cofactor. In terms of processing, topaquinone (TPQ) is generated by copper-dependent autoxidation of a specific tyrosyl residue. Expressed in the vascular tissues at the division/differentiation transition zone.

The protein resides in the secreted. It carries out the reaction a primary methyl amine + O2 + H2O = an aldehyde + H2O2 + NH4(+). With respect to regulation, repressed by semi-carbazide, a specific and irreversible inhibitor of copper amine oxidases. Oxidizes preferentially the aliphatic diamine putrescine with production of the corresponding aldehyde, ammonia and hydrogen peroxide. May be involved in the regulation of developmental programmed cell death (PCD) in both vascular tissue and the root cap. Required for jasmonic acid-(MeJA) mediated early protoxylem differentiation associated with putrescine levels reduction and H(2)O(2) accumulation in roots. The chain is Primary amine oxidase 1 from Arabidopsis thaliana (Mouse-ear cress).